We begin with the raw amino-acid sequence, 92 residues long: Islet amyloid polypeptide (92 aa).

An N-terminal signal peptide occupies residues M1–A22. The propeptide occupies T23–G34. A disulfide bridge links C38 with C43. Y73 is subject to Tyrosine amide. A propeptide spanning residues N77 to L92 is cleaved from the precursor.

It belongs to the calcitonin family. In terms of assembly, can form homodimers. Interacts with IDE and INS. Interaction with INS inhibits homodimerization and fibril formation.

The protein resides in the secreted. Its function is as follows. Amylin/IAPP is a glucoregulatory peptide hormone that plays an important role in the regulation of energy homeostasis. Selectively inhibits insulin-stimulated glucose utilization and glycogen deposition in muscle, while not affecting adipocyte glucose metabolism. IAPP function is mediated by the CALCR-RAMPs (AMYRs) receptor complexes. Amylin can also bind CALCR receptor in the absence of RAMPs, although it is more selective for AMYRs. The chain is Islet amyloid polypeptide (IAPP) from Cavia porcellus (Guinea pig).